We begin with the raw amino-acid sequence, 201 residues long: Protein CIMAP1C (201 aa).

An STPGR repeat occupies 171–186; sequence PAPTMSSRSGHTSPAR. A disordered region spans residues 172–201; sequence APTMSSRSGHTSPARLLSPWASSTRPTYAR. Positions 191-201 are enriched in polar residues; the sequence is WASSTRPTYAR.

It belongs to the CIMAP family.

This chain is Protein CIMAP1C (CIMAP1C), found in Bos taurus (Bovine).